Reading from the N-terminus, the 388-residue chain is LL-diaminopimelate aminotransferase (388 aa).

Residues Y16 and G41 each contribute to the substrate site. Pyridoxal 5'-phosphate is bound by residues Y70, 104-105 (SK), Y129, N179, Y210, and 239-241 (SLS). Substrate contacts are provided by K105, Y129, and N179. K242 bears the N6-(pyridoxal phosphate)lysine mark. R250 serves as a coordination point for pyridoxal 5'-phosphate. R368 lines the substrate pocket.

Belongs to the class-I pyridoxal-phosphate-dependent aminotransferase family. LL-diaminopimelate aminotransferase subfamily. In terms of assembly, homodimer. It depends on pyridoxal 5'-phosphate as a cofactor.

The enzyme catalyses (2S,6S)-2,6-diaminopimelate + 2-oxoglutarate = (S)-2,3,4,5-tetrahydrodipicolinate + L-glutamate + H2O + H(+). It participates in amino-acid biosynthesis; L-lysine biosynthesis via DAP pathway; LL-2,6-diaminopimelate from (S)-tetrahydrodipicolinate (aminotransferase route): step 1/1. In terms of biological role, involved in the synthesis of meso-diaminopimelate (m-DAP or DL-DAP), required for both lysine and peptidoglycan biosynthesis. Catalyzes the direct conversion of tetrahydrodipicolinate to LL-diaminopimelate. This chain is LL-diaminopimelate aminotransferase, found in Nitratidesulfovibrio vulgaris (strain ATCC 29579 / DSM 644 / CCUG 34227 / NCIMB 8303 / VKM B-1760 / Hildenborough) (Desulfovibrio vulgaris).